Consider the following 100-residue polypeptide: uncharacterized protein (100 aa).

Its subcellular location is the virion. This is an uncharacterized protein from Acanthamoeba polyphaga mimivirus (APMV).